The primary structure comprises 213 residues: A-type ATP synthase subunit D (213 aa).

It belongs to the V-ATPase D subunit family. As to quaternary structure, has multiple subunits with at least A(3), B(3), C, D, E, F, H, I and proteolipid K(x).

The protein resides in the cell membrane. In terms of biological role, component of the A-type ATP synthase that produces ATP from ADP in the presence of a proton gradient across the membrane. This is A-type ATP synthase subunit D from Saccharolobus islandicus (strain Y.N.15.51 / Yellowstone #2) (Sulfolobus islandicus).